We begin with the raw amino-acid sequence, 205 residues long: Proteasome subunit beta type-3 (205 aa).

N-acetylserine is present on serine 2. The residue at position 77 (lysine 77) is an N6-acetyllysine.

The protein belongs to the peptidase T1B family. The 26S proteasome consists of a 20S proteasome core and two 19S regulatory subunits. The 20S proteasome core is a barrel-shaped complex made of 28 subunits that are arranged in four stacked rings. The two outer rings are each formed by seven alpha subunits, and the two inner rings are formed by seven beta subunits. The proteolytic activity is exerted by three beta-subunits PSMB5, PSMB6 and PSMB7.

It localises to the cytoplasm. It is found in the nucleus. Its function is as follows. Non-catalytic component of the 20S core proteasome complex involved in the proteolytic degradation of most intracellular proteins. This complex plays numerous essential roles within the cell by associating with different regulatory particles. Associated with two 19S regulatory particles, forms the 26S proteasome and thus participates in the ATP-dependent degradation of ubiquitinated proteins. The 26S proteasome plays a key role in the maintenance of protein homeostasis by removing misfolded or damaged proteins that could impair cellular functions, and by removing proteins whose functions are no longer required. Associated with the PA200 or PA28, the 20S proteasome mediates ubiquitin-independent protein degradation. This type of proteolysis is required in several pathways including spermatogenesis (20S-PA200 complex) or generation of a subset of MHC class I-presented antigenic peptides (20S-PA28 complex). The chain is Proteasome subunit beta type-3 (PSMB3) from Bos taurus (Bovine).